Reading from the N-terminus, the 548-residue chain is Probable manganese-dependent inorganic pyrophosphatase (548 aa).

Residues 1–74 (MKALERVYVI…HIETLEPTVE (74 aa)) form a PPase part 1 region. Mn(2+)-binding residues include histidine 12, aspartate 16, and aspartate 18. 2 consecutive CBS domains span residues 77-132 (ELKN…RLKI) and 254-311 (MSKK…VILV). The segment at 306-548 (KKVILVDHNE…KIGEVLRRER (243 aa)) is PPase part 2. 3 residues coordinate Mn(2+): aspartate 312, histidine 334, and aspartate 386.

Belongs to the PPase class C family. It depends on Mn(2+) as a cofactor.

The protein localises to the cytoplasm. The catalysed reaction is diphosphate + H2O = 2 phosphate + H(+). This is Probable manganese-dependent inorganic pyrophosphatase (ppaC) from Thermotoga maritima (strain ATCC 43589 / DSM 3109 / JCM 10099 / NBRC 100826 / MSB8).